A 229-amino-acid polypeptide reads, in one-letter code: Urease accessory protein UreF (229 aa).

The protein belongs to the UreF family. As to quaternary structure, ureD, UreF and UreG form a complex that acts as a GTP-hydrolysis-dependent molecular chaperone, activating the urease apoprotein by helping to assemble the nickel containing metallocenter of UreC. The UreE protein probably delivers the nickel.

Its subcellular location is the cytoplasm. Required for maturation of urease via the functional incorporation of the urease nickel metallocenter. The chain is Urease accessory protein UreF from Methylobacterium radiotolerans (strain ATCC 27329 / DSM 1819 / JCM 2831 / NBRC 15690 / NCIMB 10815 / 0-1).